Here is a 606-residue protein sequence, read N- to C-terminus: Protein spire homolog 2 (606 aa).

The KIND domain occupies 21–219; the sequence is LSLEEVLKSY…RALFLETLEL (199 aa). A disordered region spans residues 147–181; that stretch reads KHCGSNAAKDEGYSGQDEEEEEEEEEEEEGAGRGI. A compositionally biased stretch (acidic residues) spans 162-175; the sequence is QDEEEEEEEEEEEE. 2 WH2 domains span residues 263–277 and 357–374; these read QLMKELRQGVKLKKV and LHDRVLAEIRQDHKLRPV. Disordered stretches follow at residues 438-464 and 517-537; these read DEDSPDGVDMRRVESSPTPLKRDRSFS and CRSLSSDDRSSDPGGDSASHG. Basic and acidic residues predominate over residues 445–464; that stretch reads VDMRRVESSPTPLKRDRSFS. Residues 554 to 574 form a spir-box region; it reads LALTVDGVINVRRILVKAEME.

This sequence belongs to the spire family.

The protein localises to the cytoplasm. It is found in the cytoskeleton. Its subcellular location is the cytosol. The protein resides in the cell membrane. It localises to the cytoplasmic vesicle membrane. Functionally, acts as an actin nucleation factor, remains associated with the slow-growing pointed end of the new filament. Involved in intracellular vesicle transport along actin fibers, providing a novel link between actin cytoskeleton dynamics and intracellular transport. Required for asymmetric spindle positioning and asymmetric cell division during oocyte meiosis. Required for normal formation of the cleavage furrow and for polar body extrusion during female germ cell meiosis. Also acts in the nucleus: together with SPIRE1 and SPIRE2, promotes assembly of nuclear actin filaments in response to DNA damage in order to facilitate movement of chromatin and repair factors after DNA damage. The polypeptide is Protein spire homolog 2 (spire2) (Danio rerio (Zebrafish)).